The chain runs to 208 residues: uncharacterized protein (208 aa).

4 consecutive 4Fe-4S ferredoxin-type domains span residues 59–88, 114–145, 147–176, and 174–203; these read GVLV…SVGT, GDLN…WQQK, GCIT…VNTE, and NTES…IIEW. [4Fe-4S] cluster contacts are provided by Cys-68, Cys-71, Cys-74, Cys-78, Cys-123, Cys-126, Cys-131, Cys-135, Cys-156, Cys-159, Cys-162, Cys-166, Cys-183, Cys-186, Cys-189, and Cys-193.

This is an uncharacterized protein from Escherichia coli O157:H7.